Reading from the N-terminus, the 807-residue chain is Potassium transporter 9 (807 aa).

Residues 1–59 (MAERVEASSVPEGENTIEEREVGAMWELEQKLDQPMDEEANKLNNMYREKGLSMLMLLR) lie on the Cytoplasmic side of the membrane. The helical transmembrane segment at 60-80 (LSFQSLGIVYGDLGTSPLYVF) threads the bilayer. Residues 81–96 (YNTFPDGIDDSEDVIG) are Extracellular-facing. The chain crosses the membrane as a helical span at residues 97 to 117 (ALSLIIYSLLLIPLIKYVFIV). Residues 118-185 (CKANDNGQGG…EGKEWRKRAL (68 aa)) lie on the Cytoplasmic side of the membrane. A helical transmembrane segment spans residues 186 to 206 (LVVVLLGTCMMIGDGILTPAI). Residues 207–225 (SVLSATGGIKVNNPKMSGD) are Extracellular-facing. Residues 226–246 (IVVLVAIVILIGLFSMQHYGT) form a helical membrane-spanning segment. Topologically, residues 247–248 (DK) are cytoplasmic. A helical membrane pass occupies residues 249 to 269 (VGWLFAPIVLIWFLFIGATGM). Over 270 to 299 (YNICKYDTSVLKAFSPTYIYLYFKRRGRDG) the chain is Extracellular. The helical transmembrane segment at 300–320 (WISLGGILLSITGTEALYADI) threads the bilayer. The Cytoplasmic portion of the chain corresponds to 321–322 (AY). The chain crosses the membrane as a helical span at residues 323-343 (FPLLAIQLAFTFFVFPCLLLA). Over 344–369 (YCGQAAYLVIHKEHYQDAFYASIPDS) the chain is Extracellular. The chain crosses the membrane as a helical span at residues 370 to 390 (VYWPMFIVATGAAIVGSQATI). The Cytoplasmic portion of the chain corresponds to 391–417 (SGTYSIVKQAVAHGCFPRVKIVHTSKK). A helical membrane pass occupies residues 418–438 (FLGQIYCPDINWILMLGCIAV). The Extracellular segment spans residues 439 to 454 (TASFKKQSQIGNAYGT). The chain crosses the membrane as a helical span at residues 455-475 (AVVLVMLVTTLLMVLIMLLVW). Over 476 to 481 (HCHWIL) the chain is Cytoplasmic. A helical transmembrane segment spans residues 482–502 (VLIFTFLSFFVELSYFSAVIF). Over 503-507 (KIDEG) the chain is Extracellular. The helical transmembrane segment at 508 to 528 (GWVPLIIAAISLLVMSVWHYA) threads the bilayer. Topologically, residues 529–807 (TVKKYEFEMH…LLNVGQVFYV (279 aa)) are cytoplasmic.

It belongs to the HAK/KUP transporter (TC 2.A.72.3) family.

Its subcellular location is the cell membrane. Putative potassium transporter. The polypeptide is Potassium transporter 9 (POT9) (Arabidopsis thaliana (Mouse-ear cress)).